A 99-amino-acid chain; its full sequence is NADH-quinone oxidoreductase subunit K 1 (99 aa).

3 helical membrane passes run 3 to 23 (PVNY…GVLV), 28 to 48 (IVVF…LVTF), and 59 to 79 (IVAF…LAII).

Belongs to the complex I subunit 4L family. NDH-1 is composed of 14 different subunits. Subunits NuoA, H, J, K, L, M, N constitute the membrane sector of the complex.

The protein localises to the cell membrane. It catalyses the reaction a quinone + NADH + 5 H(+)(in) = a quinol + NAD(+) + 4 H(+)(out). Its function is as follows. NDH-1 shuttles electrons from NADH, via FMN and iron-sulfur (Fe-S) centers, to quinones in the respiratory chain. The immediate electron acceptor for the enzyme in this species is believed to be a menaquinone. Couples the redox reaction to proton translocation (for every two electrons transferred, four hydrogen ions are translocated across the cytoplasmic membrane), and thus conserves the redox energy in a proton gradient. The chain is NADH-quinone oxidoreductase subunit K 1 from Streptomyces griseus subsp. griseus (strain JCM 4626 / CBS 651.72 / NBRC 13350 / KCC S-0626 / ISP 5235).